Reading from the N-terminus, the 125-residue chain is Large ribosomal subunit protein bL17 (125 aa).

Belongs to the bacterial ribosomal protein bL17 family. In terms of assembly, part of the 50S ribosomal subunit. Contacts protein L32.

The chain is Large ribosomal subunit protein bL17 from Acinetobacter baumannii (strain AB307-0294).